A 164-amino-acid polypeptide reads, in one-letter code: Coenzyme Q-binding protein coq10, mitochondrial (164 aa).

The protein belongs to the COQ10 family. In terms of assembly, interacts with coenzyme Q.

Its subcellular location is the mitochondrion inner membrane. Its function is as follows. Required for the function of coenzyme Q in the respiratory chain. May serve as a chaperone or may be involved in the transport of Q6 from its site of synthesis to the catalytic sites of the respiratory complexes. In Schizosaccharomyces pombe (strain 972 / ATCC 24843) (Fission yeast), this protein is Coenzyme Q-binding protein coq10, mitochondrial.